A 430-amino-acid chain; its full sequence is Histone acetyltransferase type B subunit 2 (430 aa).

WD repeat units follow at residues 129 to 169 (PHDG…ALTT), 180 to 220 (GHTA…FTSS), 233 to 273 (RHTD…EEEA), 279 to 319 (AHSK…QRLH), and 323 to 363 (GHED…EEQT). The segment at 365–369 (EDAED) is interaction with the histone H4 N-terminus. Residues 380 to 420 (GHTNRISEFSWCPNERWVVGSLADDNILQIWSPSRVIWGRD) form a WD 6 repeat. Position 425 is a phosphoserine (serine 425).

It belongs to the WD repeat RBAP46/RBAP48/MSI1 family. In terms of assembly, component of the HAT-B complex composed of at least hat1 and hat2. The HAT-B complex binds to histone H4 tail. Component of the CENP-A recruiting complex composed of at least mis16, mis19, mis19 and mis20.

The protein localises to the cytoplasm. It is found in the nucleus. The protein resides in the chromosome. It localises to the centromere. Its subcellular location is the kinetochore. In terms of biological role, regulatory subunit of the histone acetylase B (HAT-B) complex. The complex acetylates 'Lys-12' of histone H4 which is required for telomeric silencing. Component of the CENP-A recruiting complex that ensures the integrity of mitotic spindles through maintenance of kinetochore factors mis6/CENP-I and cnp1/CENP-A. Maintains the deacetylated state of histones specifically in the central core of the centromeres. The chain is Histone acetyltransferase type B subunit 2 (mis16) from Schizosaccharomyces pombe (strain 972 / ATCC 24843) (Fission yeast).